The primary structure comprises 104 residues: MLLRQTGWVTALLREIVSTMMVAVTVTRHAFMRTTGDRTKGTDEGTCEKDTSKLIERRAIFTDIFSAIRKPVVKNLKSVFLRASIHGSKSYFIPGVIKSNLRER.

This is an uncharacterized protein from Galliformes (FAdV-1).